The chain runs to 335 residues: Deoxyhypusine hydroxylase (335 aa).

HEAT-like PBS-type repeat units lie at residues 71-97 (LKHE…VVKD), 104-130 (CRHE…LRDN), 200-233 (QRYR…GLKD), 238-264 (FRHE…ALSD), and 271-298 (VRHE…FLND). Fe cation-binding residues include histidine 73, glutamate 74, histidine 106, and glutamate 107. 4 residues coordinate Fe cation: histidine 240, glutamate 241, histidine 273, and glutamate 274.

The protein belongs to the deoxyhypusine hydroxylase family. The cofactor is Fe(2+).

The protein resides in the cytoplasm. It is found in the nucleus. The enzyme catalyses [eIF5A protein]-deoxyhypusine + AH2 + O2 = [eIF5A protein]-hypusine + A + H2O. The protein operates within protein modification; eIF5A hypusination. Its function is as follows. Catalyzes the hydroxylation of the N(6)-(4-aminobutyl)-L-lysine intermediate to form hypusine, an essential post-translational modification only found in mature eIF-5A factor. This chain is Deoxyhypusine hydroxylase (lia1), found in Aspergillus clavatus (strain ATCC 1007 / CBS 513.65 / DSM 816 / NCTC 3887 / NRRL 1 / QM 1276 / 107).